The following is a 587-amino-acid chain: Tectonic-1 (587 aa).

Residues 1–22 form the signal peptide; the sequence is MRPRGLPPLLVVLLGCWASVSA. N36 carries N-linked (GlcNAc...) asparagine glycosylation. Residues 46–68 are disordered; the sequence is GTFPSTRPPGTPRAPGPSSGPRP. Residues 51 to 68 show a composition bias toward pro residues; the sequence is TRPPGTPRAPGPSSGPRP. Residues N295 and N528 are each glycosylated (N-linked (GlcNAc...) asparagine).

This sequence belongs to the tectonic family. Part of the tectonic-like complex (also named B9 complex).

The protein resides in the cytoplasm. The protein localises to the cytoskeleton. It localises to the cilium basal body. It is found in the secreted. Component of the tectonic-like complex, a complex localized at the transition zone of primary cilia and acting as a barrier that prevents diffusion of transmembrane proteins between the cilia and plasma membranes. Regulator of Hedgehog (Hh), required for both activation and inhibition of the Hh pathway in the patterning of the neural tube. During neural tube development, it is required for formation of the most ventral cell types and for full Hh pathway activation. Functions in Hh signal transduction to fully activate the pathway in the presence of high Hh levels and to repress the pathway in the absence of Hh signals. Modulates Hh signal transduction downstream of SMO and RAB23. The sequence is that of Tectonic-1 (TCTN1) from Homo sapiens (Human).